The chain runs to 120 residues: Transcription elongation factor SPT4 (120 aa).

The tract at residues Met1–Leu39 is interaction with spt-5. Residues Cys15–Cys35 form a C4-type zinc finger.

This sequence belongs to the SPT4 family. Interacts with spt-5 to form DSIF. DSIF interacts with RNA polymerase II and with the positive transcription elongation factor b complex (P-TEFb complex), which is composed of cdk-9 and cyclin-T (cit-1.1 or cit-1.2).

It is found in the nucleus. Its function is as follows. May function as a component of the DRB sensitivity-inducing factor complex (DSIF complex), which regulates transcription elongation by RNA polymerase II. DSIF may enhance transcriptional pausing at sites proximal to the promoter, which may in turn facilitate the assembly of an elongation competent RNA polymerase II complex. The sequence is that of Transcription elongation factor SPT4 (spt-4) from Caenorhabditis elegans.